A 214-amino-acid chain; its full sequence is Pyridoxine/pyridoxamine 5'-phosphate oxidase (214 aa).

Residues 8-11 and K66 each bind substrate; that span reads RINY. Residues 61-66, 76-77, R82, K83, and Q105 contribute to the FMN site; these read RIVLVK and FT. Residues Y123, R127, and S131 each coordinate substrate. FMN-binding positions include 140-141 and W184; that span reads QS. 190–192 contacts substrate; sequence RLH. FMN is bound at residue R194.

The protein belongs to the pyridoxamine 5'-phosphate oxidase family. Homodimer. FMN is required as a cofactor.

The catalysed reaction is pyridoxamine 5'-phosphate + O2 + H2O = pyridoxal 5'-phosphate + H2O2 + NH4(+). It carries out the reaction pyridoxine 5'-phosphate + O2 = pyridoxal 5'-phosphate + H2O2. It participates in cofactor metabolism; pyridoxal 5'-phosphate salvage; pyridoxal 5'-phosphate from pyridoxamine 5'-phosphate: step 1/1. Its pathway is cofactor metabolism; pyridoxal 5'-phosphate salvage; pyridoxal 5'-phosphate from pyridoxine 5'-phosphate: step 1/1. Catalyzes the oxidation of either pyridoxine 5'-phosphate (PNP) or pyridoxamine 5'-phosphate (PMP) into pyridoxal 5'-phosphate (PLP). The protein is Pyridoxine/pyridoxamine 5'-phosphate oxidase of Burkholderia multivorans (strain ATCC 17616 / 249).